The primary structure comprises 548 residues: Pentatricopeptide repeat-containing protein At5g15300 (548 aa).

11 PPR repeats span residues Asp-76–Pro-110, Asp-111–Leu-145, Asn-146–Ala-176, His-177–Ala-211, Trp-212–Lys-238, Asp-239–Pro-273, Asp-274–Ser-308, Gly-314–Thr-348, Trp-349–Pro-378, Asn-379–Met-409, and Asn-415–Glu-445. Residues Val-450–Asp-525 are type E motif.

This sequence belongs to the PPR family. PCMP-E subfamily.

The polypeptide is Pentatricopeptide repeat-containing protein At5g15300 (PCMP-E40) (Arabidopsis thaliana (Mouse-ear cress)).